The following is a 103-amino-acid chain: Histone H4 (103 aa).

The interval 1–32 is disordered; that stretch reads MNTQSIGAKGKSKAAKGIAKRHRKQSSLSDSI. Residues 10–25 show a composition bias toward basic residues; it reads GKSKAAKGIAKRHRKQ. Position 16 is an N6-acetyl-N6-methyllysine; alternate (lysine 16). At lysine 16 the chain carries N6-methyllysine; alternate. The DNA-binding element occupies 20–24; sequence KRHRK. An N6-glutaryllysine modification is found at lysine 94.

Belongs to the histone H4 family. In terms of assembly, the nucleosome is a histone octamer containing two molecules each of H2A, H2B, H3 and H4 assembled in one H3-H4 heterotetramer and two H2A-H2B heterodimers. The octamer wraps approximately 147 bp of DNA. In terms of processing, glutarylation at Lys-94 (H4K91glu) destabilizes nucleosomes by promoting dissociation of the H2A-H2B dimers from nucleosomes.

The protein localises to the nucleus. Its subcellular location is the chromosome. Core component of nucleosome. Nucleosomes wrap and compact DNA into chromatin, limiting DNA accessibility to the cellular machineries which require DNA as a template. Histones thereby play a central role in transcription regulation, DNA repair, DNA replication and chromosomal stability. DNA accessibility is regulated via a complex set of post-translational modifications of histones, also called histone code, and nucleosome remodeling. This is Histone H4 (HHF1) from Encephalitozoon cuniculi (strain GB-M1) (Microsporidian parasite).